The chain runs to 436 residues: Tryptophan synthase beta chain (436 aa).

The residue at position 129 (Lys129) is an N6-(pyridoxal phosphate)lysine.

The protein belongs to the TrpB family. Tetramer of two alpha and two beta chains. The cofactor is pyridoxal 5'-phosphate.

The enzyme catalyses (1S,2R)-1-C-(indol-3-yl)glycerol 3-phosphate + L-serine = D-glyceraldehyde 3-phosphate + L-tryptophan + H2O. Its pathway is amino-acid biosynthesis; L-tryptophan biosynthesis; L-tryptophan from chorismate: step 5/5. Its function is as follows. The beta subunit is responsible for the synthesis of L-tryptophan from indole and L-serine. The sequence is that of Tryptophan synthase beta chain from Prochlorococcus marinus (strain MIT 9313).